We begin with the raw amino-acid sequence, 968 residues long: Serine/threonine-protein kinase 10 (968 aa).

Phosphoserine occurs at positions 13 and 20. Residues tryptophan 36–valine 294 form the Protein kinase domain. Residues leucine 42–valine 50 and lysine 65 each bind ATP. Aspartate 157 serves as the catalytic Proton acceptor. The interval aspartate 175–glycine 224 is activation segment. Position 191 is a phosphoserine (serine 191). Composition is skewed to polar residues over residues leucine 337–serine 351 and serine 361–proline 393. Disordered regions lie at residues leucine 337 to arginine 411 and alanine 425 to leucine 490. Phosphoserine is present on residues serine 438, serine 450, serine 454, serine 485, serine 514, and serine 549. Positions alanine 441 to leucine 457 are enriched in polar residues. Positions glutamine 573–cysteine 947 form a coiled coil. 4 disordered regions span residues valine 668–lysine 690, isoleucine 827–glutamine 865, leucine 910–asparagine 929, and glutamate 944–serine 968. The segment covering glutamate 835–glutamine 865 has biased composition (basic and acidic residues). Threonine 952 is subject to Phosphothreonine.

Belongs to the protein kinase superfamily. STE Ser/Thr protein kinase family. STE20 subfamily. As to quaternary structure, homodimer; homodimerization is required for activation segment autophosphorylation. In terms of processing, autophosphorylates following homodimerization, leading to activation of the protein. Highly expressed in rapidly proliferating tissues (spleen, placenta, and peripheral blood leukocytes). Also expressed in brain, heart, skeletal muscle, colon, thymus, kidney, liver, small intestine and lung.

The protein localises to the cell membrane. The catalysed reaction is L-seryl-[protein] + ATP = O-phospho-L-seryl-[protein] + ADP + H(+). The enzyme catalyses L-threonyl-[protein] + ATP = O-phospho-L-threonyl-[protein] + ADP + H(+). Its activity is regulated as follows. Inhibited by the pyrrole-indolinone inhibitor SU11274 (K00593): intercalates between the ATP-binding Lys-65 and alpha-C glutamate (Glu-81), resulting in a partial disordering of the lysine side chain. Also specifically inhibited by erlotinib. Slightly inhibited by gefitinib. Functionally, serine/threonine-protein kinase involved in regulation of lymphocyte migration. Phosphorylates MSN, and possibly PLK1. Involved in regulation of lymphocyte migration by mediating phosphorylation of ERM proteins such as MSN. Acts as a negative regulator of MAP3K1/MEKK1. May also act as a cell cycle regulator by acting as a polo kinase kinase: mediates phosphorylation of PLK1 in vitro; however such data require additional evidences in vivo. The sequence is that of Serine/threonine-protein kinase 10 (STK10) from Homo sapiens (Human).